A 101-amino-acid chain; its full sequence is Small ribosomal subunit protein uS14 (101 aa).

Belongs to the universal ribosomal protein uS14 family. In terms of assembly, part of the 30S ribosomal subunit. Contacts proteins S3 and S10.

In terms of biological role, binds 16S rRNA, required for the assembly of 30S particles and may also be responsible for determining the conformation of the 16S rRNA at the A site. The chain is Small ribosomal subunit protein uS14 from Acinetobacter baumannii (strain SDF).